The following is a 277-amino-acid chain: Orotidine 5'-phosphate decarboxylase (277 aa).

Substrate contacts are provided by residues D40, 62-64 (KTH), 93-102 (DRKFIDIGNT), Y229, and R247. K95 (proton donor) is an active-site residue.

This sequence belongs to the OMP decarboxylase family.

The catalysed reaction is orotidine 5'-phosphate + H(+) = UMP + CO2. It participates in pyrimidine metabolism; UMP biosynthesis via de novo pathway; UMP from orotate: step 2/2. The protein is Orotidine 5'-phosphate decarboxylase (pyrG) of Aspergillus kawachii (White koji mold).